Consider the following 535-residue polypeptide: Cytochrome P450 4c3 (535 aa).

Positions 342 and 481 each coordinate heme.

Belongs to the cytochrome P450 family. The cofactor is heme.

Its subcellular location is the endoplasmic reticulum membrane. It is found in the microsome membrane. Its function is as follows. May be involved in the metabolism of insect hormones and in the breakdown of synthetic insecticides. In Drosophila melanogaster (Fruit fly), this protein is Cytochrome P450 4c3 (Cyp4c3).